A 169-amino-acid chain; its full sequence is 16S rRNA aminocarboxypropyltransferase (169 aa).

S-adenosyl-L-methionine contacts are provided by Thr15, Val65, Leu88, and Thr107.

Belongs to the TDD superfamily. TSR3 family.

It is found in the cytoplasm. It catalyses the reaction an N(1)-methylpseudouridine in rRNA + S-adenosyl-L-methionine = N(1)-methyl-N(3)-[(3S)-3-amino-3-carboxypropyl]pseudouridine in rRNA + S-methyl-5'-thioadenosine + H(+). Aminocarboxypropyltransferase that catalyzes the aminocarboxypropyl transfer on pseudouridine corresponding to position 914 in M.jannaschii 16S rRNA. It constitutes the last step in biosynthesis of the hypermodified N1-methyl-N3-(3-amino-3-carboxypropyl) pseudouridine (m1acp3-Psi). The polypeptide is 16S rRNA aminocarboxypropyltransferase (Methanopyrus kandleri (strain AV19 / DSM 6324 / JCM 9639 / NBRC 100938)).